Reading from the N-terminus, the 288-residue chain is Shikimate dehydrogenase (NADP(+)) (288 aa).

Shikimate contacts are provided by residues 15-17 and T64; that span reads SKS. Catalysis depends on K68, which acts as the Proton acceptor. Residue E83 participates in NADP(+) binding. N92 and D117 together coordinate shikimate. NADP(+) contacts are provided by residues 141–145, 165–170, and M232; these read GAGGA and NRTVSK. Y234 serves as a coordination point for shikimate. G254 contributes to the NADP(+) binding site.

The protein belongs to the shikimate dehydrogenase family. In terms of assembly, homodimer.

It carries out the reaction shikimate + NADP(+) = 3-dehydroshikimate + NADPH + H(+). It participates in metabolic intermediate biosynthesis; chorismate biosynthesis; chorismate from D-erythrose 4-phosphate and phosphoenolpyruvate: step 4/7. Involved in the biosynthesis of the chorismate, which leads to the biosynthesis of aromatic amino acids. Catalyzes the reversible NADPH linked reduction of 3-dehydroshikimate (DHSA) to yield shikimate (SA). The sequence is that of Shikimate dehydrogenase (NADP(+)) from Psychrobacter cryohalolentis (strain ATCC BAA-1226 / DSM 17306 / VKM B-2378 / K5).